Reading from the N-terminus, the 297-residue chain is Small ribosomal subunit biogenesis GTPase RsgA (297 aa).

Positions 65-223 (INEIGRPAVA…IADTPGFSAI (159 aa)) constitute a CP-type G domain. Residues 114 to 117 (SKSD) and 166 to 174 (GQSGAGKST) contribute to the GTP site. Zn(2+)-binding residues include Cys-247, Cys-252, His-254, and Cys-260.

It belongs to the TRAFAC class YlqF/YawG GTPase family. RsgA subfamily. In terms of assembly, monomer. Associates with 30S ribosomal subunit, binds 16S rRNA. Requires Zn(2+) as cofactor.

The protein resides in the cytoplasm. One of several proteins that assist in the late maturation steps of the functional core of the 30S ribosomal subunit. Helps release RbfA from mature subunits. May play a role in the assembly of ribosomal proteins into the subunit. Circularly permuted GTPase that catalyzes slow GTP hydrolysis, GTPase activity is stimulated by the 30S ribosomal subunit. The protein is Small ribosomal subunit biogenesis GTPase RsgA of Lactobacillus johnsonii (strain CNCM I-12250 / La1 / NCC 533).